Consider the following 533-residue polypeptide: Pre-mRNA-splicing factor cwf24 (533 aa).

The segment covering 1–17 has biased composition (polar residues); sequence MEQKNLNINQASGSKIN. A disordered region spans residues 1-69; sequence MEQKNLNINQ…MRDNIPIVSG (69 aa). Positions 27 to 43 are enriched in basic residues; the sequence is SRRRHRPRQGLKRKKGF. The C3H1-type zinc-finger motif lies at 184–212; that stretch reads DYQPDVCKDYKLTGYCGYGDTCKFLHMRE. The RING-type zinc-finger motif lies at 254–292; it reads CLICKKDYRSPIATTCGHHFCEQCAITRYRKTPTCIQCG. The region spanning 379 to 524 is the N-acetyltransferase domain; it reads YFIREITESN…SAFYMVCPLS (146 aa).

This sequence belongs to the CWC24 family. Belongs to the 40S cdc5-associated complex (or cwf complex), a spliceosome sub-complex reminiscent of a late-stage spliceosome composed of the U2, U5 and U6 snRNAs and at least brr2, cdc5, cwf2/prp3, cwf3/syf1, cwf4/syf3, cwf5/ecm2, spp42/cwf6, cwf7/spf27, cwf8, cwf9, cwf10, cwf11, cwf12, prp45/cwf13, cwf14, cwf15, cwf16, cwf17, cwf18, cwf19, cwf20, cwf21, cwf22, cwf23, cwf24, cwf25, cwf26, cyp7/cwf27, cwf28, cwf29/ist3, lea1, msl1, prp5/cwf1, prp10, prp12/sap130, prp17, prp22, sap61, sap62, sap114, sap145, slu7, smb1, smd1, smd3, smf1, smg1 and syf2.

It is found in the nucleus. Its function is as follows. Involved in mRNA splicing. This is Pre-mRNA-splicing factor cwf24 (cwf24) from Schizosaccharomyces pombe (strain 972 / ATCC 24843) (Fission yeast).